A 237-amino-acid polypeptide reads, in one-letter code: Cyclic nucleotide phosphodiesterase inhibitor (237 aa).

The signal sequence occupies residues 1 to 20 (MAKIIISLILLLSLFSFSYG). N28, N65, and N70 each carry an N-linked (GlcNAc...) asparagine glycan. 5 Cys-rich CT repeats span residues 57–81 (DLCH…CNDN), 82–105 (NPCT…CDPG), 116–139 (DPCT…CNDG), 140–162 (DACT…CDDN), and 163–186 (DPCT…CSIK). N-linked (GlcNAc...) asparagine glycosylation is present at N153. The N-linked (GlcNAc...) asparagine glycan is linked to N207.

In terms of biological role, PDI acts by binding stoichiometrically to cyclic nucleotide phosphodiesterase, changing the KM of the enzyme for cAMP from 10 uM to 2 mM. The chain is Cyclic nucleotide phosphodiesterase inhibitor (pdiA) from Dictyostelium discoideum (Social amoeba).